The following is a 279-amino-acid chain: Conserved oligomeric Golgi complex subunit 7 (279 aa).

As to quaternary structure, component of the conserved oligomeric Golgi (COG or Sec34/Sec35) complex which consists of eight different proteins COG1-COG8.

The protein resides in the golgi apparatus membrane. Acts as a component of the peripheral membrane COG complex that is involved in intra-Golgi protein trafficking. COG is located at the cis-Golgi, and regulates tethering of retrograde intra-Golgi vesicles and possibly a number of other membrane trafficking events. This Saccharomyces cerevisiae (strain ATCC 204508 / S288c) (Baker's yeast) protein is Conserved oligomeric Golgi complex subunit 7 (COG7).